Consider the following 28-residue polypeptide: Cyclotide vodo I1 (28 aa).

Cystine bridges form between cysteine 4/cysteine 18, cysteine 8/cysteine 20, and cysteine 13/cysteine 25.

This is a cyclic peptide. Post-translationally, contains 3 disulfide bonds.

In terms of biological role, probably participates in a plant defense mechanism. This Viola odorata (Sweet violet) protein is Cyclotide vodo I1.